Reading from the N-terminus, the 124-residue chain is Nucleoid-associated protein Noca_0318 (124 aa).

This sequence belongs to the YbaB/EbfC family. In terms of assembly, homodimer.

The protein localises to the cytoplasm. The protein resides in the nucleoid. In terms of biological role, binds to DNA and alters its conformation. May be involved in regulation of gene expression, nucleoid organization and DNA protection. The chain is Nucleoid-associated protein Noca_0318 from Nocardioides sp. (strain ATCC BAA-499 / JS614).